A 155-amino-acid polypeptide reads, in one-letter code: uncharacterized protein (155 aa).

A signal peptide spans 1-23; sequence MTILSLSRFMLAGVLLASFNASA.

It to E.coli YfjT.

This is an uncharacterized protein from Escherichia coli (strain K12).